Consider the following 107-residue polypeptide: UPF0122 protein BLi01817/BL02321 (107 aa).

This sequence belongs to the UPF0122 family.

Might take part in the signal recognition particle (SRP) pathway. This is inferred from the conservation of its genetic proximity to ftsY/ffh. May be a regulatory protein. The polypeptide is UPF0122 protein BLi01817/BL02321 (Bacillus licheniformis (strain ATCC 14580 / DSM 13 / JCM 2505 / CCUG 7422 / NBRC 12200 / NCIMB 9375 / NCTC 10341 / NRRL NRS-1264 / Gibson 46)).